A 411-amino-acid polypeptide reads, in one-letter code: Serpin A3-5 (411 aa).

The signal sequence occupies residues 1 to 24 (MRAERTSFLLALGLLMAGIRSVHC). 5 N-linked (GlcNAc...) asparagine glycosylation sites follow: N100, N180, N230, N264, and N318.

Belongs to the serpin family. In terms of assembly, homodimer.

It is found in the cytoplasmic vesicle. The protein localises to the secretory vesicle. Its subcellular location is the chromaffin granule. It localises to the secreted. Its function is as follows. Serine protease inhibitor. This is Serpin A3-5 from Bos taurus (Bovine).